Here is a 338-residue protein sequence, read N- to C-terminus: Heat-inducible transcription repressor HrcA (338 aa).

This sequence belongs to the HrcA family.

Functionally, negative regulator of class I heat shock genes (grpE-dnaK-dnaJ and groELS operons). Prevents heat-shock induction of these operons. This chain is Heat-inducible transcription repressor HrcA, found in Bacillus thuringiensis (strain Al Hakam).